The sequence spans 402 residues: Palmitoyltransferase PFA4 (402 aa).

Topologically, residues 1–8 (MAVQLKWP) are cytoplasmic. Residues 9–29 (IIGVVIPCVLIAMVAYGSHYF) traverse the membrane as a helical segment. Over 30-39 (VFRTNLSRTE) the chain is Lumenal. A helical membrane pass occupies residues 40–60 (QILYEVYVCIVWLSYYLAIVV). Residues 61-125 (DPGSPPKNFT…GHNNLPHFLR (65 aa)) lie on the Cytoplasmic side of the membrane. Residues 78–128 (RWCKKCQNYKPERSHHCKTCNKCVLKMDHHCPWTYNCVGHNNLPHFLRFVF) form the DHHC domain. Residue Cys108 is the S-palmitoyl cysteine intermediate of the active site. Residues 126-146 (FVFFLIVGMTYVLFQLGKQVL) form a helical membrane-spanning segment. Residues 147 to 165 (HYYDSSKLPSYLIDKKEMC) lie on the Lumenal side of the membrane. Residues 166-186 (AVIFLLPVTFFVFVSIIILFV) traverse the membrane as a helical segment. Residues 187–402 (RCMINLLFRG…LVSKDEISNN (216 aa)) lie on the Cytoplasmic side of the membrane.

It belongs to the DHHC palmitoyltransferase family. PFA4 subfamily.

The protein localises to the endoplasmic reticulum membrane. It carries out the reaction L-cysteinyl-[protein] + hexadecanoyl-CoA = S-hexadecanoyl-L-cysteinyl-[protein] + CoA. Mediates the reversible addition of palmitate to target proteins, thereby regulating their membrane association and biological function. This is Palmitoyltransferase PFA4 from Debaryomyces hansenii (strain ATCC 36239 / CBS 767 / BCRC 21394 / JCM 1990 / NBRC 0083 / IGC 2968) (Yeast).